The primary structure comprises 209 residues: Large ribosomal subunit protein bL25 (209 aa).

The protein belongs to the bacterial ribosomal protein bL25 family. CTC subfamily. Part of the 50S ribosomal subunit; part of the 5S rRNA/L5/L18/L25 subcomplex. Contacts the 5S rRNA. Binds to the 5S rRNA independently of L5 and L18.

Its function is as follows. This is one of the proteins that binds to the 5S RNA in the ribosome where it forms part of the central protuberance. This chain is Large ribosomal subunit protein bL25, found in Xanthomonas campestris pv. campestris (strain B100).